The following is a 228-amino-acid chain: Leucyl/phenylalanyl-tRNA--protein transferase (228 aa).

It belongs to the L/F-transferase family.

Its subcellular location is the cytoplasm. It carries out the reaction N-terminal L-lysyl-[protein] + L-leucyl-tRNA(Leu) = N-terminal L-leucyl-L-lysyl-[protein] + tRNA(Leu) + H(+). The catalysed reaction is N-terminal L-arginyl-[protein] + L-leucyl-tRNA(Leu) = N-terminal L-leucyl-L-arginyl-[protein] + tRNA(Leu) + H(+). It catalyses the reaction L-phenylalanyl-tRNA(Phe) + an N-terminal L-alpha-aminoacyl-[protein] = an N-terminal L-phenylalanyl-L-alpha-aminoacyl-[protein] + tRNA(Phe). Functionally, functions in the N-end rule pathway of protein degradation where it conjugates Leu, Phe and, less efficiently, Met from aminoacyl-tRNAs to the N-termini of proteins containing an N-terminal arginine or lysine. In Sulfurimonas denitrificans (strain ATCC 33889 / DSM 1251) (Thiomicrospira denitrificans (strain ATCC 33889 / DSM 1251)), this protein is Leucyl/phenylalanyl-tRNA--protein transferase.